The chain runs to 449 residues: UDP-glycosyltransferase 76E6 (449 aa).

Residues Ser-274, Ala-333–Gln-335, His-350–Glu-358, and His-372–Gln-375 each bind UDP-alpha-D-glucose.

The protein belongs to the UDP-glycosyltransferase family.

The chain is UDP-glycosyltransferase 76E6 (UGT76E6) from Arabidopsis thaliana (Mouse-ear cress).